Consider the following 156-residue polypeptide: 6,7-dimethyl-8-ribityllumazine synthase (156 aa).

5-amino-6-(D-ribitylamino)uracil contacts are provided by residues Phe-25, 59–61 (AWE), and 83–85 (AVI). 88–89 (ST) contributes to the (2S)-2-hydroxy-3-oxobutyl phosphate binding site. His-91 (proton donor) is an active-site residue. Asn-116 contacts 5-amino-6-(D-ribitylamino)uracil. Position 130 (Arg-130) interacts with (2S)-2-hydroxy-3-oxobutyl phosphate.

Belongs to the DMRL synthase family. As to quaternary structure, forms an icosahedral capsid composed of 60 subunits, arranged as a dodecamer of pentamers.

The catalysed reaction is (2S)-2-hydroxy-3-oxobutyl phosphate + 5-amino-6-(D-ribitylamino)uracil = 6,7-dimethyl-8-(1-D-ribityl)lumazine + phosphate + 2 H2O + H(+). It participates in cofactor biosynthesis; riboflavin biosynthesis; riboflavin from 2-hydroxy-3-oxobutyl phosphate and 5-amino-6-(D-ribitylamino)uracil: step 1/2. Its function is as follows. Catalyzes the formation of 6,7-dimethyl-8-ribityllumazine by condensation of 5-amino-6-(D-ribitylamino)uracil with 3,4-dihydroxy-2-butanone 4-phosphate. This is the penultimate step in the biosynthesis of riboflavin. This is 6,7-dimethyl-8-ribityllumazine synthase from Acinetobacter baumannii (strain AB0057).